An 836-amino-acid polypeptide reads, in one-letter code: Lon protease (836 aa).

One can recognise a Lon N-terminal domain in the interval 41–233 (LPVLPLRNTV…RLIHFLNREV (193 aa)). 385 to 392 (GPPGVGKT) is an ATP binding site. A Lon proteolytic domain is found at 627–811 (VMLSGVAVGL…DDLIDYVLEP (185 aa)). Residues Ser-714 and Lys-757 contribute to the active site. A disordered region spans residues 816-836 (APQFKVEDKDHTPETTGNESE).

Belongs to the peptidase S16 family. Homohexamer. Organized in a ring with a central cavity.

It localises to the cytoplasm. It catalyses the reaction Hydrolysis of proteins in presence of ATP.. Its function is as follows. ATP-dependent serine protease that mediates the selective degradation of mutant and abnormal proteins as well as certain short-lived regulatory proteins. Required for cellular homeostasis and for survival from DNA damage and developmental changes induced by stress. Degrades polypeptides processively to yield small peptide fragments that are 5 to 10 amino acids long. Binds to DNA in a double-stranded, site-specific manner. The protein is Lon protease of Chloroherpeton thalassium (strain ATCC 35110 / GB-78).